The primary structure comprises 256 residues: Pimeloyl-[acyl-carrier protein] methyl ester esterase (256 aa).

In terms of domain architecture, AB hydrolase-1 spans 17-241 (VYLIHGWGAN…KAAHAPFLSH (225 aa)). Substrate-binding positions include W23, 83-84 (SL), and 145-149 (FLQLQ). Residue S83 is the Nucleophile of the active site. Residues D207 and H235 contribute to the active site. H235 is a substrate binding site.

Belongs to the AB hydrolase superfamily. Carboxylesterase BioH family. As to quaternary structure, monomer.

The protein localises to the cytoplasm. The enzyme catalyses 6-carboxyhexanoyl-[ACP] methyl ester + H2O = 6-carboxyhexanoyl-[ACP] + methanol + H(+). The protein operates within cofactor biosynthesis; biotin biosynthesis. Its function is as follows. The physiological role of BioH is to remove the methyl group introduced by BioC when the pimeloyl moiety is complete. It allows to synthesize pimeloyl-ACP via the fatty acid synthetic pathway through the hydrolysis of the ester bonds of pimeloyl-ACP esters. The chain is Pimeloyl-[acyl-carrier protein] methyl ester esterase from Neisseria meningitidis serogroup C / serotype 2a (strain ATCC 700532 / DSM 15464 / FAM18).